A 296-amino-acid polypeptide reads, in one-letter code: Cytidine deaminase (296 aa).

CMP/dCMP-type deaminase domains follow at residues 47–167 and 186–296; these read TEAE…FGPK and DSSD…VDPV. 88–90 lines the substrate pocket; it reads NLE. A Zn(2+)-binding site is contributed by H101. E103 functions as the Proton donor in the catalytic mechanism. C128 and C131 together coordinate Zn(2+).

This sequence belongs to the cytidine and deoxycytidylate deaminase family. Homodimer. The cofactor is Zn(2+).

The enzyme catalyses cytidine + H2O + H(+) = uridine + NH4(+). It carries out the reaction 2'-deoxycytidine + H2O + H(+) = 2'-deoxyuridine + NH4(+). Functionally, this enzyme scavenges exogenous and endogenous cytidine and 2'-deoxycytidine for UMP synthesis. This chain is Cytidine deaminase, found in Shewanella sp. (strain W3-18-1).